The sequence spans 126 residues: Holo-[acyl-carrier-protein] synthase (126 aa).

Residues aspartate 9 and glutamate 58 each coordinate Mg(2+).

It belongs to the P-Pant transferase superfamily. AcpS family. Mg(2+) serves as cofactor.

Its subcellular location is the cytoplasm. The catalysed reaction is apo-[ACP] + CoA = holo-[ACP] + adenosine 3',5'-bisphosphate + H(+). Its function is as follows. Transfers the 4'-phosphopantetheine moiety from coenzyme A to a Ser of acyl-carrier-protein. In Photorhabdus laumondii subsp. laumondii (strain DSM 15139 / CIP 105565 / TT01) (Photorhabdus luminescens subsp. laumondii), this protein is Holo-[acyl-carrier-protein] synthase.